A 255-amino-acid polypeptide reads, in one-letter code: 5-oxoprolinase subunit A (255 aa).

The protein belongs to the LamB/PxpA family. Forms a complex composed of PxpA, PxpB and PxpC.

The catalysed reaction is 5-oxo-L-proline + ATP + 2 H2O = L-glutamate + ADP + phosphate + H(+). Its function is as follows. Catalyzes the cleavage of 5-oxoproline to form L-glutamate coupled to the hydrolysis of ATP to ADP and inorganic phosphate. This Clostridium beijerinckii (strain ATCC 51743 / NCIMB 8052) (Clostridium acetobutylicum) protein is 5-oxoprolinase subunit A.